The chain runs to 253 residues: MIRVSVVGAKGRMGSHVVEAVRAADDTELALALDAGDDLTQITPQNTDVVVEFTVPAVSLNNVLTLVRQGVNVVVGTTGWTDEKLDQVRAALAETETIDGRKQSVFIAPNFAISAVLADVFARIAAPYFESAEVIELHHPDKVDAPSGTAIHTAHAIADARKAAGLGEMPDNTQTDDGSRGAVIDGVHVHAVRLRGLNAHEEVLLGNAGEQLVIRADSFDRISFMPGVLLAVRKVDSGEFPGLTVGLDQFLDL.

NAD(+) contacts are provided by residues 8 to 13 (GAKGRM), Asp34, 76 to 78 (GTT), and 108 to 111 (APNF). The Proton donor/acceptor role is filled by His138. His139 lines the (S)-2,3,4,5-tetrahydrodipicolinate pocket. Catalysis depends on Lys142, which acts as the Proton donor. Residue 148–149 (GT) participates in (S)-2,3,4,5-tetrahydrodipicolinate binding.

Belongs to the DapB family.

Its subcellular location is the cytoplasm. It catalyses the reaction (S)-2,3,4,5-tetrahydrodipicolinate + NAD(+) + H2O = (2S,4S)-4-hydroxy-2,3,4,5-tetrahydrodipicolinate + NADH + H(+). It carries out the reaction (S)-2,3,4,5-tetrahydrodipicolinate + NADP(+) + H2O = (2S,4S)-4-hydroxy-2,3,4,5-tetrahydrodipicolinate + NADPH + H(+). Its pathway is amino-acid biosynthesis; L-lysine biosynthesis via DAP pathway; (S)-tetrahydrodipicolinate from L-aspartate: step 4/4. Catalyzes the conversion of 4-hydroxy-tetrahydrodipicolinate (HTPA) to tetrahydrodipicolinate. The chain is 4-hydroxy-tetrahydrodipicolinate reductase from Bifidobacterium animalis subsp. lactis (strain AD011).